Reading from the N-terminus, the 403-residue chain is Guanine nucleotide-binding protein alpha-8 subunit (403 aa).

Residue Gly-2 is the site of N-myristoyl glycine attachment. A lipid anchor (S-palmitoyl cysteine) is attached at Cys-3. The 326-residue stretch at 31–356 (LDFRILLLGA…KVLMKATKDL (326 aa)) folds into the G-alpha domain. Positions 34–47 (RILLLGAGESGKST) are G1 motif. GTP contacts are provided by residues 39-46 (GAGESGKS), 174-180 (IMTRVRT), 199-203 (DVGGQ), 268-271 (NKKD), and Ala-324. The Mg(2+) site is built by Ser-46 and Thr-180. The interval 172–180 (DCIMTRVRT) is G2 motif. The interval 195 to 204 (FRVVDVGGQR) is G3 motif. The G4 motif stretch occupies residues 264-271 (FLVLNKKD). Residues 322–327 (IAARYK) form a G5 motif region. Residues 353 to 403 (TKDLKKSSKQSSKSSLGNSTQNNSNNNNNNNNSNNNNGQTTIDGATAKINS) form a disordered region. Residues 374–389 (NNSNNNNNNNNSNNNN) are compositionally biased toward low complexity. A compositionally biased stretch (polar residues) spans 390–403 (GQTTIDGATAKINS).

The protein belongs to the G-alpha family. In terms of assembly, g proteins are composed of 3 units; alpha, beta and gamma. The alpha chain contains the guanine nucleotide binding site.

Guanine nucleotide-binding proteins (G proteins) are involved as modulators or transducers in various transmembrane signaling systems. G alpha-8 is a potential analog for the G(s)-like G-proteins which stimulate adenylate cyclase in mammals. This is Guanine nucleotide-binding protein alpha-8 subunit (gpaH) from Dictyostelium discoideum (Social amoeba).